The following is a 115-amino-acid chain: Holo-[acyl-carrier-protein] synthase (115 aa).

2 residues coordinate Mg(2+): Asp-5 and Glu-50.

This sequence belongs to the P-Pant transferase superfamily. AcpS family. Mg(2+) serves as cofactor.

The protein resides in the cytoplasm. The catalysed reaction is apo-[ACP] + CoA = holo-[ACP] + adenosine 3',5'-bisphosphate + H(+). In terms of biological role, transfers the 4'-phosphopantetheine moiety from coenzyme A to a Ser of acyl-carrier-protein. The sequence is that of Holo-[acyl-carrier-protein] synthase from Campylobacter fetus subsp. fetus (strain 82-40).